A 501-amino-acid chain; its full sequence is Lysine--tRNA ligase (501 aa).

The Mg(2+) site is built by glutamate 410 and glutamate 417.

The protein belongs to the class-II aminoacyl-tRNA synthetase family. Homodimer. The cofactor is Mg(2+).

The protein resides in the cytoplasm. It carries out the reaction tRNA(Lys) + L-lysine + ATP = L-lysyl-tRNA(Lys) + AMP + diphosphate. This Shewanella pealeana (strain ATCC 700345 / ANG-SQ1) protein is Lysine--tRNA ligase.